A 644-amino-acid chain; its full sequence is uncharacterized protein (644 aa).

Positions 1 to 39 (MKANGLDNDPARTRMERTDIDSEHPEAQPLLNNNHRTLG) are disordered. Residues 1 to 90 (MKANGLDNDP…ILNILILINT (90 aa)) lie on the Cytoplasmic side of the membrane. Residues 9–26 (DPARTRMERTDIDSEHPE) are compositionally biased toward basic and acidic residues. Ser-22, Ser-56, and Ser-63 each carry phosphoserine. The chain crosses the membrane as a helical span at residues 91-111 (IWLVTTLISDFFFNINILFGF). Residues 112-122 (SNRYASFNDLT) are Vacuolar-facing. A helical transmembrane segment spans residues 123 to 143 (LIFISIIANSFNLWFNKLGLY). Residues 144 to 147 (SALD) lie on the Cytoplasmic side of the membrane. A helical transmembrane segment spans residues 148-168 (YSLNVTLCVLTLFNLALTYLI). Residues 169-174 (KYTRQR) are Vacuolar-facing. The chain crosses the membrane as a helical span at residues 175-195 (IGFVGTFTYLWTSFSFFIGAI). The Cytoplasmic segment spans residues 196-271 (LDWYLLFYNN…EWVSIGFRNT (76 aa)). The segment at 225 to 251 (NENHTNSTENRDRSQYGSGSPTPTHRS) is disordered. Over residues 239-251 (QYGSGSPTPTHRS) the composition is skewed to polar residues. Position 244 is a phosphoserine (Ser-244). A helical membrane pass occupies residues 272–292 (IKFLILIFFALFTLNTLLTTL). Residues 293–644 (DTYRLTHKLP…IGELGKLTED (352 aa)) are Vacuolar-facing. The AB hydrolase-1 domain occupies 348 to 619 (PIILFEHGGY…IVEGGHEIYK (272 aa)). Positions 469 to 492 (GRGDGDDGDDGNGNDGDGRNHDKT) are disordered.

The protein localises to the vacuole membrane. This is an uncharacterized protein from Saccharomyces cerevisiae (strain YJM789) (Baker's yeast).